The following is a 510-amino-acid chain: Cytochrome P450 monooxygenase penQ (510 aa).

The chain crosses the membrane as a helical span at residues 9-26 (WIVTLIVAATTYCTLRWV). N-linked (GlcNAc...) asparagine glycosylation is found at Asn-148 and Asn-341. Cys-448 contributes to the heme binding site. N-linked (GlcNAc...) asparagine glycosylation is present at Asn-482.

The protein belongs to the cytochrome P450 family. Requires heme as cofactor.

It localises to the membrane. Its pathway is secondary metabolite biosynthesis. Functionally, cytochrome P450 monooxygenase; part of the gene cluster that mediates the biosynthesis of the indole diterpenes penitrems. The geranylgeranyl diphosphate (GGPP) synthase penG catalyzes the first step in penitrem biosynthesis via conversion of farnesyl pyrophosphate and isopentyl pyrophosphate into geranylgeranyl pyrophosphate (GGPP). Condensation of indole-3-glycerol phosphate with GGPP by the prenyl transferase penC then forms 3-geranylgeranylindole (3-GGI). Epoxidation by the FAD-dependent monooxygenase penM leads to a epoxidized-GGI that is substrate of the terpene cyclase penB for cyclization to yield paspaline. Paspaline is subsequently converted to 13-desoxypaxilline by the cytochrome P450 monooxygenase penP, the latter being then converted to paxilline by the cytochrome P450 monooxygenase penQ. Paxilline is converted to beta-paxitriol via C-10 ketoreduction by the short-chain dehydrogenase PC-15 which can be monoprenylated at the C-20 by the indole diterpene prenyltransferase penD. A two-step elimination (acetylation and elimination) process performed by the O-acetyltransferase PC-16 and the P.simplicissimum ptmI-ortholog not yet identified in P.crustosum, leads to the production of the prenylated form of penijanthine. The FAD-linked oxidoreductase ptmO then converts the prenylated form of penijanthine into PC-M5 which is in turn transformed into PC-M4 by the aromatic dimethylallyltransferase PC-22. A series of oxidation steps involving 4 cytochrome P450 monooxygenases (PC-21, PC-05, PC-23, PC-20) and a FAD-dependent monooxygenase (PC-14) are required for the transformation of PC-M4 to penitrems A and E. Synthesis of these final products is proposed to proceed via penitrems D and C (PC-21, PC-05, PC-14) and penitrems B and F (PC-21, PC-05, PC-14, PC-23). This is Cytochrome P450 monooxygenase penQ from Penicillium crustosum (Blue mold fungus).